A 522-amino-acid polypeptide reads, in one-letter code: GMP synthase [glutamine-hydrolyzing] (522 aa).

The Glutamine amidotransferase type-1 domain maps to 5–204; it reads YILIIDFGSQ…VKNICNYTNV (200 aa). The active-site Nucleophile is cysteine 82. Residues histidine 178 and glutamate 180 contribute to the active site. Positions 205 to 397 constitute a GMPS ATP-PPase domain; that stretch reads IKYSLSIRKI…IGIPKEIIFR (193 aa). 232–238 contributes to the ATP binding site; the sequence is SGGIDSF.

Homodimer.

It carries out the reaction XMP + L-glutamine + ATP + H2O = GMP + L-glutamate + AMP + diphosphate + 2 H(+). It functions in the pathway purine metabolism; GMP biosynthesis; GMP from XMP (L-Gln route): step 1/1. Functionally, catalyzes the synthesis of GMP from XMP. This chain is GMP synthase [glutamine-hydrolyzing], found in Wigglesworthia glossinidia brevipalpis.